A 292-amino-acid polypeptide reads, in one-letter code: Tissue factor (292 aa).

An N-terminal signal peptide occupies residues 1–32; sequence MAPPTRLQVPRPGTAVPYTVLLGWLLAQVARA. Over 33–250 the chain is Extracellular; it reads ADTTGRAYNL…SREQGRAREM (218 aa). Fibronectin type-III domains follow at residues 35–126 and 148–240; these read TTGR…PFRN and QVGT…TECT. N-linked (GlcNAc...) asparagine glycosylation occurs at N41. 2 short sequence motifs (WKS motif) span residues 44-46 and 75-77; these read WKS. A disulfide bond links C79 and C87. Residues N114, N154, N167, and N182 are each glycosylated (N-linked (GlcNAc...) asparagine). The cysteines at positions 216 and 239 are disulfide-linked. Residues 251–271 form a helical membrane-spanning segment; it reads FFIIGAVVVVALLIIVLSVTV. The Cytoplasmic segment spans residues 272–292; sequence YKCRKARAGPSGKESSPLNIA. A lipid anchor (S-palmitoyl cysteine) is attached at C274.

It belongs to the tissue factor family. As to quaternary structure, interacts with HSPE; the interaction, inhibited by heparin, promotes the generation of activated factor X and activates coagulation in the presence of activated factor VII. In terms of tissue distribution, brain, heart.

It is found in the membrane. In terms of biological role, initiates blood coagulation by forming a complex with circulating factor VII or VIIa. The [TF:VIIa] complex activates factors IX or X by specific limited proteolysis. TF plays a role in normal hemostasis by initiating the cell-surface assembly and propagation of the coagulation protease cascade. The chain is Tissue factor (F3) from Oryctolagus cuniculus (Rabbit).